Consider the following 557-residue polypeptide: DNA 3'-5' helicase XPB (557 aa).

The required for protein stability or solubility stretch occupies residues 1–135 (MTDGPLIVQS…APLLGTRIAP (135 aa)). In terms of domain architecture, Helicase ATP-binding spans 190-344 (VDNFWNGGSG…DVFSLIGPKR (155 aa)). 203–210 (LPCGAGKT) is a binding site for ATP. The DEAH box signature appears at 298 to 301 (DEVH). Residues 398 to 544 (RVVEKLVAQH…AYRIVDADDI (147 aa)) form the Helicase C-terminal domain.

The protein belongs to the helicase family. RAD25/XPB subfamily. Monomer. Requires Mn(2+) as cofactor. Mg(2+) serves as cofactor. Ca(2+) is required as a cofactor.

It carries out the reaction Couples ATP hydrolysis with the unwinding of duplex DNA by translocating in the 3'-5' direction.. It catalyses the reaction ATP + H2O = ADP + phosphate + H(+). In terms of biological role, ATP-dependent 3'-5' DNA helicase, unwinds 3'-overhangs, 3'- flaps, and splayed-arm DNA substrates but not 5'-overhangs or 5'-flap substrates. Requires ATP hydrolysis for activity; the ATPase activity is DNA-dependent and requires a minimum of 4 single-stranded nucleotides (nt) with 6-10 nt providing all necessary interactions for full processive unwinding. The ATPase prefers ATP over CTP or GTP, is almost inactive with TTP. This Kineococcus radiotolerans (strain ATCC BAA-149 / DSM 14245 / SRS30216) protein is DNA 3'-5' helicase XPB.